The chain runs to 85 residues: Large ribosomal subunit protein bL27 (85 aa).

The segment at 1–22 (MAHKKAAGSTRNGRDSESKRLG) is disordered.

Belongs to the bacterial ribosomal protein bL27 family.

This chain is Large ribosomal subunit protein bL27, found in Pseudoalteromonas translucida (strain TAC 125).